The sequence spans 282 residues: MAQHVKKPEWLKIRLGGNEKFTETKSIVEGHCLHTICTSGKCPNMGECWSRGTATFMIGGDICTRACRFCNTLTGRPKPLNEAEPTHVALSIKLMGLNHAVVTSVDRDDLPDYGAAHWVKTIQEIRRINSGVTLEVLIPDFKGRMDLVDMIIEASPDVISHNLETVRRLTPSVRSVATYDTSLAVLRHIAQSGKMPAKTGMMLGLGETEEEILELMDDALAAGVSVITIGQYLQPSRKNLPVVEYITPEQFEHLRLVGIEKGFRTIESAPLVRSSYHAERHL.

[4Fe-4S] cluster contacts are provided by Cys-37, Cys-42, Cys-48, Cys-63, Cys-67, Cys-70, and Ser-275. The Radical SAM core domain occupies 49–264 (WSRGTATFMI…RLVGIEKGFR (216 aa)).

This sequence belongs to the radical SAM superfamily. Lipoyl synthase family. Requires [4Fe-4S] cluster as cofactor.

The protein localises to the cytoplasm. It carries out the reaction [[Fe-S] cluster scaffold protein carrying a second [4Fe-4S](2+) cluster] + N(6)-octanoyl-L-lysyl-[protein] + 2 oxidized [2Fe-2S]-[ferredoxin] + 2 S-adenosyl-L-methionine + 4 H(+) = [[Fe-S] cluster scaffold protein] + N(6)-[(R)-dihydrolipoyl]-L-lysyl-[protein] + 4 Fe(3+) + 2 hydrogen sulfide + 2 5'-deoxyadenosine + 2 L-methionine + 2 reduced [2Fe-2S]-[ferredoxin]. It participates in protein modification; protein lipoylation via endogenous pathway; protein N(6)-(lipoyl)lysine from octanoyl-[acyl-carrier-protein]: step 2/2. In terms of biological role, catalyzes the radical-mediated insertion of two sulfur atoms into the C-6 and C-8 positions of the octanoyl moiety bound to the lipoyl domains of lipoate-dependent enzymes, thereby converting the octanoylated domains into lipoylated derivatives. This is Lipoyl synthase from Porphyromonas gingivalis (strain ATCC BAA-308 / W83).